The following is a 335-amino-acid chain: Phosphate acyltransferase (335 aa).

The protein belongs to the PlsX family. Homodimer. Probably interacts with PlsY.

It is found in the cytoplasm. The catalysed reaction is a fatty acyl-[ACP] + phosphate = an acyl phosphate + holo-[ACP]. It functions in the pathway lipid metabolism; phospholipid metabolism. Functionally, catalyzes the reversible formation of acyl-phosphate (acyl-PO(4)) from acyl-[acyl-carrier-protein] (acyl-ACP). This enzyme utilizes acyl-ACP as fatty acyl donor, but not acyl-CoA. The polypeptide is Phosphate acyltransferase (Streptococcus suis (strain 98HAH33)).